A 156-amino-acid polypeptide reads, in one-letter code: Small ribosomal subunit protein uS7 (156 aa).

The protein belongs to the universal ribosomal protein uS7 family. In terms of assembly, part of the 30S ribosomal subunit. Contacts proteins S9 and S11.

Functionally, one of the primary rRNA binding proteins, it binds directly to 16S rRNA where it nucleates assembly of the head domain of the 30S subunit. Is located at the subunit interface close to the decoding center, probably blocks exit of the E-site tRNA. The polypeptide is Small ribosomal subunit protein uS7 (Paenarthrobacter aurescens (strain TC1)).